Here is a 283-residue protein sequence, read N- to C-terminus: Elongation factor Ts (283 aa).

Residues 80 to 83 (TDFV) are involved in Mg(2+) ion dislocation from EF-Tu.

It belongs to the EF-Ts family.

The protein localises to the cytoplasm. Functionally, associates with the EF-Tu.GDP complex and induces the exchange of GDP to GTP. It remains bound to the aminoacyl-tRNA.EF-Tu.GTP complex up to the GTP hydrolysis stage on the ribosome. This is Elongation factor Ts from Haemophilus influenzae (strain 86-028NP).